The sequence spans 448 residues: Eukaryotic translation initiation factor 3 subunit E (448 aa).

Residues 254 to 423 (TDLFFSPAYI…GTVIMNHPPQ (170 aa)) form the PCI domain.

This sequence belongs to the eIF-3 subunit E family. Component of the eukaryotic translation initiation factor 3 (eIF-3) complex.

It localises to the cytoplasm. Functionally, component of the eukaryotic translation initiation factor 3 (eIF-3) complex, which is involved in protein synthesis of a specialized repertoire of mRNAs and, together with other initiation factors, stimulates binding of mRNA and methionyl-tRNAi to the 40S ribosome. The eIF-3 complex specifically targets and initiates translation of a subset of mRNAs involved in cell proliferation. This is Eukaryotic translation initiation factor 3 subunit E (int6) from Emericella nidulans (strain FGSC A4 / ATCC 38163 / CBS 112.46 / NRRL 194 / M139) (Aspergillus nidulans).